The sequence spans 640 residues: Threonine--tRNA ligase (640 aa).

The TGS domain maps to 1-61; that stretch reads MPVITLPDGS…SNDATLQIIT (61 aa). The tract at residues 242–533 is catalytic; sequence DHRKIGKQLD…LIEHYAGVFP (292 aa). Residues cysteine 333, histidine 384, and histidine 510 each coordinate Zn(2+).

The protein belongs to the class-II aminoacyl-tRNA synthetase family. In terms of assembly, homodimer. The cofactor is Zn(2+).

The protein localises to the cytoplasm. It catalyses the reaction tRNA(Thr) + L-threonine + ATP = L-threonyl-tRNA(Thr) + AMP + diphosphate + H(+). Its function is as follows. Catalyzes the attachment of threonine to tRNA(Thr) in a two-step reaction: L-threonine is first activated by ATP to form Thr-AMP and then transferred to the acceptor end of tRNA(Thr). Also edits incorrectly charged L-seryl-tRNA(Thr). The polypeptide is Threonine--tRNA ligase (Pseudomonas putida (strain ATCC 700007 / DSM 6899 / JCM 31910 / BCRC 17059 / LMG 24140 / F1)).